The following is an 88-amino-acid chain: N-alpha-acetyltransferase 38, NatC auxiliary subunit (88 aa).

In terms of domain architecture, Sm spans 1–72 (MDILKLSDFI…VKTIMIDKPV (72 aa)).

Component of the N-terminal acetyltransferase C (NatC) complex, composed of the catalytic subunit Naa30/MAK3, a large auxiliary subunit Naa35/MAK10 and a small auxiliary subunit Naa38/MAK31.

Component of the NatC N-terminal acetyltransferase, which associates with the ribosome to acetylate nascent protein chains in a cotranslational manner. NatC acetylates protein N-termini starting with methionine, followed by a hydrophobic or amphipathic amino acid, with amino acids at positions 3 and 4 also contributing to NatC recognition. The first 4 amino acids of cognate substrates are recognized at the Naa30/MAK3-Naa35/MAK10 interface. NatC-dependent acetylation targets various substrate proteins to specific subcellular sites, including isoform 2 of tRNA-specific methyltransferase Trm1 to the inner nuclear membrane. Catalyzes the acetylation of the N-terminal Met of ARF-like GTPase ARL3, which is required for its Golgi localization via interaction with the Golgi-localized integral membrane protein SYS1, which may serve as a receptor for acetylated ARL3. Catalyzes the acetylation of the N-terminal Met of L-A virus Gag protein. MAK31 is necessary for the structural stability of L-A double-stranded RNA-containing particles. Necessary for growth at 37 degrees Celsius as well as for maintenance of the killer plasmid. The sequence is that of N-alpha-acetyltransferase 38, NatC auxiliary subunit (MAK31) from Saccharomyces cerevisiae (strain ATCC 204508 / S288c) (Baker's yeast).